We begin with the raw amino-acid sequence, 500 residues long: Farnesylcysteine lyase (500 aa).

An N-terminal signal peptide occupies residues 1–24 (MKDFPIAISLLFALLSPVLLPCSG). Asn56, Asn113, Asn211, and Asn281 each carry an N-linked (GlcNAc...) asparagine glycan.

It belongs to the prenylcysteine oxidase family. It depends on FAD as a cofactor. As to expression, expressed in seedilings, flowers, stems, leaves and roots.

It is found in the lysosome. It catalyses the reaction S-(2E,6E)-farnesyl-L-cysteine + O2 + H2O = (2E,6E)-farnesal + L-cysteine + H2O2. Involved in the degradation of prenylcysteine. Cleaves specifically the thioether bond of S-farnesyl-L-cysteine and has no activity with S-geranylgeranyl-L-cysteine. Also recognizes N-acetyl-farnesylcysteine and may have a role in deprenylation of farnesylated proteins. This chain is Farnesylcysteine lyase, found in Arabidopsis thaliana (Mouse-ear cress).